The chain runs to 360 residues: MSLKAIKYSNGKLEILDQLLLPAQSKYIDVKGVEDGWKAINKMQVRGAPAIAIVGCLSLAVEIFGEKFDTKQTFKQEVEGKLNYLVSARPTAVNMKLAAEDLISLANALAQDESISVDTMKERFLKAIEDMLDKDIADNMAIGKNGADIILSHIPNGGSVRILTHCNTGSLATAGYGTALGVIRKLHEMNRLEHVYCTETRPYNQGARLTAYELVHDKLPATLILDNMVASLFKSRRVAAVVVGADRVAANGDTANKIGTYQIGVVAKYHDVPFYVAAPFTSIDLKIPSGDRIVIEERPDREMTHVGEHRIAAPGIACWNPAFDVTTADLITGIITEKGVFKPAELKEKVEQIISTNQKL.

Asp246 acts as the Proton donor in catalysis.

It belongs to the eIF-2B alpha/beta/delta subunits family. MtnA subfamily.

It is found in the cytoplasm. The protein localises to the nucleus. The catalysed reaction is 5-(methylsulfanyl)-alpha-D-ribose 1-phosphate = 5-(methylsulfanyl)-D-ribulose 1-phosphate. The protein operates within amino-acid biosynthesis; L-methionine biosynthesis via salvage pathway; L-methionine from S-methyl-5-thio-alpha-D-ribose 1-phosphate: step 1/6. Catalyzes the interconversion of methylthioribose-1-phosphate (MTR-1-P) into methylthioribulose-1-phosphate (MTRu-1-P). The protein is Methylthioribose-1-phosphate isomerase of Aedes aegypti (Yellowfever mosquito).